We begin with the raw amino-acid sequence, 165 residues long: Chorismate pyruvate-lyase (165 aa).

Residues M35, R77, L115, and E156 each contribute to the substrate site.

It belongs to the UbiC family. In terms of assembly, monomer.

It localises to the cytoplasm. It catalyses the reaction chorismate = 4-hydroxybenzoate + pyruvate. Its pathway is cofactor biosynthesis; ubiquinone biosynthesis. Removes the pyruvyl group from chorismate, with concomitant aromatization of the ring, to provide 4-hydroxybenzoate (4HB) for the ubiquinone pathway. In Escherichia coli (strain K12 / MC4100 / BW2952), this protein is Chorismate pyruvate-lyase.